A 1174-amino-acid polypeptide reads, in one-letter code: Creatine kinase, flagellar (1174 aa).

Over residues 1–14 (MGCAASSQQTTATG) the composition is skewed to polar residues. The interval 1–62 (MGCAASSQQT…PFVEPDPNYP (62 aa)) is disordered. Low complexity predominate over residues 18 to 39 (AAGEKANPAPANNNPNAANKAE). In terms of domain architecture, Phosphagen kinase N-terminal 1 spans 53-139 (PFVEPDPNYP…FDPTIDKRHN (87 aa)). One copy of the 1; approximate repeat lies at 61–414 (YPDLSKHNNY…EKALEKGSDI (354 aa)). Positions 166 to 408 (YVLSCRVRTG…KKLIELEKAL (243 aa)) constitute a Phosphagen kinase C-terminal 1 domain. Residues 169-173 (SCRVR), histidine 232, arginine 277, and 333-337 (RAGVH) contribute to the ATP site. Residues 426 to 512 (RAEQVKEGYP…FDPVIDARHG (87 aa)) form the Phosphagen kinase N-terminal 2 domain. The stretch at 434–787 (YPDLSKHNNH…EKKLEKGEDI (354 aa)) is one 2; approximate repeat. One can recognise a Phosphagen kinase C-terminal 2 domain in the interval 539–781 (YVLSCRVRTG…ELLVQMEKKL (243 aa)). ATP contacts are provided by residues 542–546 (SCRVR), histidine 605, arginine 706, 734–739 (RGTGGV), and aspartate 749. The Phosphagen kinase N-terminal 3 domain maps to 800 to 886 (PIKPFSYDYP…FDPVISARHG (87 aa)). The stretch at 808-1161 (YPDFSLHNNW…EKALMKGEDI (354 aa)) is one 3; approximate repeat. A Phosphagen kinase C-terminal 3 domain is found at 913–1155 (FVLSCRVRTG…KLLVNLEKAL (243 aa)).

Belongs to the ATP:guanido phosphotransferase family. In terms of assembly, monomer.

The protein localises to the cytoplasm. The protein resides in the cytoskeleton. Its subcellular location is the flagellum axoneme. It carries out the reaction creatine + ATP = N-phosphocreatine + ADP + H(+). This axonemal protein participates in an energy shuttle that utilizes phosphocreatine to transfer the energy from ATP generated by the mitochondrion in the sperm head to dynein in the distal portions of the flagellum. This chain is Creatine kinase, flagellar, found in Strongylocentrotus purpuratus (Purple sea urchin).